Reading from the N-terminus, the 129-residue chain is Bacteriohemerythrin (129 aa).

The Fe cation site is built by His-19, His-59, Glu-63, His-78, His-82, His-119, and Asp-124.

It belongs to the hemerythrin family. In terms of assembly, monomer.

Functionally, oxygen-binding protein. May be involved in a storage mechanism or for delivery to oxygen-requiring enzymes. The oxygen-binding site contains two iron atoms. This is Bacteriohemerythrin from Clostridium acetobutylicum (strain ATCC 824 / DSM 792 / JCM 1419 / IAM 19013 / LMG 5710 / NBRC 13948 / NRRL B-527 / VKM B-1787 / 2291 / W).